Consider the following 218-residue polypeptide: Putative transposase InsD for insertion element IS2E (218 aa).

Positions 23 to 206 constitute an Integrase catalytic domain; that stretch reads KPAVPPSKRA…SPREYLRQRA (184 aa).

Functionally, involved in the transposition of the insertion sequence IS2. The sequence is that of Putative transposase InsD for insertion element IS2E (insD8) from Escherichia coli (strain K12).